Reading from the N-terminus, the 264-residue chain is 3-methyl-2-oxobutanoate hydroxymethyltransferase 1 (264 aa).

Mg(2+) contacts are provided by Asp45 and Asp84. 3-methyl-2-oxobutanoate contacts are provided by residues Asp45–Ser46, Asp84, and Lys112. Glu114 contributes to the Mg(2+) binding site. Glu181 (proton acceptor) is an active-site residue.

This sequence belongs to the PanB family. As to quaternary structure, homodecamer; pentamer of dimers. It depends on Mg(2+) as a cofactor.

The protein localises to the cytoplasm. The catalysed reaction is 3-methyl-2-oxobutanoate + (6R)-5,10-methylene-5,6,7,8-tetrahydrofolate + H2O = 2-dehydropantoate + (6S)-5,6,7,8-tetrahydrofolate. It participates in cofactor biosynthesis; (R)-pantothenate biosynthesis; (R)-pantoate from 3-methyl-2-oxobutanoate: step 1/2. Its function is as follows. Catalyzes the reversible reaction in which hydroxymethyl group from 5,10-methylenetetrahydrofolate is transferred onto alpha-ketoisovalerate to form ketopantoate. The sequence is that of 3-methyl-2-oxobutanoate hydroxymethyltransferase 1 from Aliivibrio fischeri (strain ATCC 700601 / ES114) (Vibrio fischeri).